A 156-amino-acid chain; its full sequence is MYCPFCQHGHSRVIDSRVIEAGSAIRRRRECSQCQGRFTTIEKAVLLVLKRNGVTEPFSREKVVTGVRRACQGRDVSDDSLKRLAQQVEETVRSSGSSQVRANDIGLAILDPLRELDEVAYLRFASVYKSFESADDFEKEIRLMRRQSREKQVQQG.

The segment at 3-34 (CPFCQHGHSRVIDSRVIEAGSAIRRRRECSQC) is a zinc-finger region. In terms of domain architecture, ATP-cone spans 46–136 (LLVLKRNGVT…VYKSFESADD (91 aa)).

The protein belongs to the NrdR family. Requires Zn(2+) as cofactor.

Functionally, negatively regulates transcription of bacterial ribonucleotide reductase nrd genes and operons by binding to NrdR-boxes. The protein is Transcriptional repressor NrdR of Corynebacterium efficiens (strain DSM 44549 / YS-314 / AJ 12310 / JCM 11189 / NBRC 100395).